A 554-amino-acid polypeptide reads, in one-letter code: Serine/threonine-protein phosphatase 2B catalytic subunit (554 aa).

Positions 119, 121, and 147 each coordinate Fe cation. Positions 147 and 179 each coordinate Zn(2+). The active-site Proton donor is the histidine 180. Positions 228 and 310 each coordinate Zn(2+). The interval 411 to 433 is disordered; sequence LKESAPTQHKQPAPSENENKADQ. The segment covering 415–426 has biased composition (polar residues); that stretch reads APTQHKQPAPSE.

The protein belongs to the PPP phosphatase family. PP-2B subfamily. In terms of assembly, composed of two components (A and B), the A component is the catalytic subunit and the B component confers calcium sensitivity. The cofactor is Fe(3+). Zn(2+) serves as cofactor.

The enzyme catalyses O-phospho-L-seryl-[protein] + H2O = L-seryl-[protein] + phosphate. It carries out the reaction O-phospho-L-threonyl-[protein] + H2O = L-threonyl-[protein] + phosphate. Calcium-dependent, calmodulin-stimulated protein phosphatase. This subunit may have a role in the calmodulin activation of calcineurin. Appears to be involved in cytokinesis, mating, transport, nuclear and spindle pole body positioning, and cell shape. This chain is Serine/threonine-protein phosphatase 2B catalytic subunit (ppb1), found in Schizosaccharomyces pombe (strain 972 / ATCC 24843) (Fission yeast).